We begin with the raw amino-acid sequence, 137 residues long: Competence protein D (137 aa).

In terms of biological role, involved in transformation (genetic competence for DNA uptake). The protein is Competence protein D (comD) of Haemophilus influenzae (strain ATCC 51907 / DSM 11121 / KW20 / Rd).